A 162-amino-acid chain; its full sequence is Auracyanin-A (162 aa).

Positions 1 to 22 are cleaved as a signal peptide; the sequence is MKITLRMMVLAVLTAMAMVLAA. Cysteine 23 is lipidated: N-palmitoyl cysteine. The S-diacylglycerol cysteine moiety is linked to residue cysteine 23. Positions 42–162 constitute a Plastocyanin-like domain; it reads VTIEIGSKGE…PLMQGKLVVN (121 aa). Cu cation is bound by residues histidine 81, cysteine 146, histidine 151, and methionine 155.

Monomer. The cofactor is Cu cation.

The protein localises to the cell membrane. Its function is as follows. Probably a soluble electron acceptor for the integral membrane protein electron transfer alternative complex III (ACIII). This Chloroflexus aurantiacus (strain ATCC 29366 / DSM 635 / J-10-fl) protein is Auracyanin-A.